Reading from the N-terminus, the 175-residue chain is ATP-dependent protease subunit HslV (175 aa).

Thr-2 is a catalytic residue. Positions 156, 159, and 162 each coordinate Na(+).

The protein belongs to the peptidase T1B family. HslV subfamily. In terms of assembly, a double ring-shaped homohexamer of HslV is capped on each side by a ring-shaped HslU homohexamer. The assembly of the HslU/HslV complex is dependent on binding of ATP.

The protein localises to the cytoplasm. The catalysed reaction is ATP-dependent cleavage of peptide bonds with broad specificity.. With respect to regulation, allosterically activated by HslU binding. Functionally, protease subunit of a proteasome-like degradation complex believed to be a general protein degrading machinery. The protein is ATP-dependent protease subunit HslV of Rhizobium etli (strain CIAT 652).